The following is a 191-amino-acid chain: Elongation factor P (191 aa).

This sequence belongs to the elongation factor P family.

It is found in the cytoplasm. It functions in the pathway protein biosynthesis; polypeptide chain elongation. Its function is as follows. Involved in peptide bond synthesis. Stimulates efficient translation and peptide-bond synthesis on native or reconstituted 70S ribosomes in vitro. Probably functions indirectly by altering the affinity of the ribosome for aminoacyl-tRNA, thus increasing their reactivity as acceptors for peptidyl transferase. The sequence is that of Elongation factor P from Bartonella tribocorum (strain CIP 105476 / IBS 506).